Here is a 609-residue protein sequence, read N- to C-terminus: Albumin (609 aa).

The first 18 residues, 1–18 (MKWVTFISLLFLFSSAYS), serve as a signal peptide directing secretion. The propeptide occupies 19-24 (RGVFRR). 3 Albumin domains span residues 19–210 (RGVF…DELR), 211–403 (DEGK…EFKP), and 404–601 (LVEE…KLVA). Histidine 27 is a binding site for Cu cation. Serine 29 is subject to Phosphoserine. Residues glutamate 30 and aspartate 37 each coordinate Ca(2+). A disulfide bridge links cysteine 77 with cysteine 86. Phosphoserine occurs at positions 82 and 89. Histidine 91 contacts Zn(2+). Cystine bridges form between cysteine 99/cysteine 115, cysteine 114/cysteine 125, cysteine 148/cysteine 193, cysteine 192/cysteine 201, cysteine 224/cysteine 270, and cysteine 269/cysteine 277. Residue threonine 107 is modified to Phosphothreonine. Lysine 229 bears the N6-succinyllysine mark. Lysine 264 serves as a coordination point for (4Z,15Z)-bilirubin IXalpha. Ca(2+) is bound at residue glutamate 268. Residues histidine 271 and aspartate 273 each contribute to the Zn(2+) site. Ca(2+) is bound by residues aspartate 273, glutamate 276, aspartate 279, and aspartate 283. 8 disulfides stabilise this stretch: cysteine 289/cysteine 303, cysteine 302/cysteine 313, cysteine 340/cysteine 385, cysteine 384/cysteine 393, cysteine 416/cysteine 462, cysteine 461/cysteine 472, cysteine 485/cysteine 501, and cysteine 500/cysteine 511. Serine 297 carries the phosphoserine modification. The residue at position 443 (serine 443) is a Phosphoserine. Threonine 444 and threonine 446 each carry phosphothreonine. An N6-succinyllysine modification is found at lysine 460. A Phosphoserine modification is found at serine 513. 2 disulfide bridges follow: cysteine 538/cysteine 583 and cysteine 582/cysteine 591. At lysine 543 the chain carries N6-succinyllysine. Position 558 is an N6-methyllysine (lysine 558). Threonine 570 is modified (phosphothreonine). Lysine 588 bears the N6-succinyllysine mark.

The protein belongs to the ALB/AFP/VDB family. In terms of assembly, interacts with FCGRT; this interaction regulates ALB homeostasis. Interacts with TASOR. In plasma, occurs in a covalently-linked complex with chromophore-bound alpha-1-microglobulin; this interaction does not prevent fatty acid binding to ALB. Phosphorylated by FAM20C in the extracellular medium. As to expression, plasma.

The protein resides in the secreted. In terms of biological role, binds water, Ca(2+), Na(+), K(+), fatty acids, hormones, bilirubin and drugs. Its main function is the regulation of the colloidal osmotic pressure of blood. Major zinc transporter in plasma, typically binds about 80% of all plasma zinc. Major calcium and magnesium transporter in plasma, binds approximately 45% of circulating calcium and magnesium in plasma. Potentially has more than two calcium-binding sites and might additionally bind calcium in a non-specific manner. The shared binding site between zinc and calcium at residue Asp-273 suggests a crosstalk between zinc and calcium transport in the blood. The rank order of affinity is zinc &gt; calcium &gt; magnesium. Binds to the bacterial siderophore enterobactin and inhibits enterobactin-mediated iron uptake of E.coli from ferric transferrin, and may thereby limit the utilization of iron and growth of enteric bacteria such as E.coli. Does not prevent iron uptake by the bacterial siderophore aerobactin. The polypeptide is Albumin (ALB) (Pongo abelii (Sumatran orangutan)).